The chain runs to 82 residues: Leucinostatins biosynthesis cluster protein M (82 aa).

Residues 34 to 82 (ARNETHDPSGPRAPVSSMRLGPRSRPYHHGTARLRGSPNCSRDSSSAAT) form a disordered region. Residues 71 to 82 (PNCSRDSSSAAT) show a composition bias toward polar residues.

Part of the gene cluster that mediates the biosynthesis of the lipopeptide antibiotics leucinostatins that show extensive biological activities, including antimalarial, antiviral, antibacterial, antifungal, and antitumor activities, as well as phytotoxic. The function of lcsM within the leucinostatins biosynthesis has not been identified yet. The polypeptide is Leucinostatins biosynthesis cluster protein M (Purpureocillium lilacinum (Paecilomyces lilacinus)).